The primary structure comprises 115 residues: Large ribosomal subunit protein uL18 (115 aa).

The segment at methionine 1–glycine 24 is disordered. Over residues leucine 10–glycine 20 the composition is skewed to basic residues.

It belongs to the universal ribosomal protein uL18 family. Part of the 50S ribosomal subunit; part of the 5S rRNA/L5/L18/L25 subcomplex. Contacts the 5S and 23S rRNAs.

Its function is as follows. This is one of the proteins that bind and probably mediate the attachment of the 5S RNA into the large ribosomal subunit, where it forms part of the central protuberance. This chain is Large ribosomal subunit protein uL18, found in Lactococcus lactis subsp. cremoris (strain MG1363).